Consider the following 646-residue polypeptide: Lipoteichoic acid synthase (646 aa).

Residues 1–7 lie on the Cytoplasmic side of the membrane; that stretch reads MSLPKKK. A helical transmembrane segment spans residues 8-28; sequence IGIFAFFLLTVFTITLKTYFS. The Extracellular segment spans residues 29–43; it reads YYVDFSLGVKGLVQN. Residues 44–64 traverse the membrane as a helical segment; sequence LILIMNPYSLIALVLSVFLFF. Topologically, residues 65–68 are cytoplasmic; the sequence is KGKK. A helical membrane pass occupies residues 69–89; sequence AFWFIFIGGFLLTFLLYANVV. Topologically, residues 90 to 119 are extracellular; it reads YFRFFSDFLTFSTLNQAGNVESMGGAVSAS. Residues 120-140 traverse the membrane as a helical segment; it reads FKWYDFVYFIDTIIYLAILIF. Residues 141 to 153 lie on the Cytoplasmic side of the membrane; that stretch reads KRKWLDNRAFSKK. A helical transmembrane segment spans residues 154-174; that stretch reads FVPVVMATSVALFFLNLAFAE. The Extracellular segment spans residues 175-646; the sequence is TDRPELLTRT…KSGPKGNEKK (472 aa). Positions 255 and 300 each coordinate Mn(2+). The active site involves T300. Substrate is bound at residue H416. Mn(2+) is bound by residues D475 and H476.

Belongs to the LTA synthase family. In terms of processing, proteolytically cleaved.

It localises to the cell membrane. Its subcellular location is the secreted. Its pathway is cell wall biogenesis; lipoteichoic acid biosynthesis. In terms of biological role, catalyzes the polymerization of lipoteichoic acid (LTA) polyglycerol phosphate, a reaction that presumably uses phosphatidylglycerol (PG) as substrate. Is required for staphylococcal growth and cell division process. The polypeptide is Lipoteichoic acid synthase (ltaS) (Staphylococcus epidermidis (strain ATCC 12228 / FDA PCI 1200)).